We begin with the raw amino-acid sequence, 284 residues long: Putative ABC transporter ATP-binding protein MG468.1 homolog (284 aa).

In terms of domain architecture, ABC transporter spans 53–284 (VLFKGVCKAV…PKTINEINWV (232 aa)). Residue 89-96 (GKSGSGKT) coordinates ATP.

It belongs to the ABC transporter superfamily.

The sequence is that of Putative ABC transporter ATP-binding protein MG468.1 homolog from Mycoplasma pneumoniae (strain ATCC 29342 / M129 / Subtype 1) (Mycoplasmoides pneumoniae).